Here is a 620-residue protein sequence, read N- to C-terminus: NADPH-dependent diflavin oxidoreductase 1 (620 aa).

One can recognise a Flavodoxin-like domain in the interval 6-168; that stretch reads IAILYGSETG…VYSEFEKRVL (163 aa). Residues 12–17, 59–62, and 106–115 each bind FMN; these read SETGTA, STTG, and LGDSSYSKFN. Positions 222-475 constitute an FAD-binding FR-type domain; it reads SSVKYGTVVT…LLPAGKQDRP (254 aa). FAD-binding positions include R380, 410 to 413, and 442 to 445; these read RFFS and GLCT. Position 535 to 536 (535 to 536) interacts with NADP(+); it reads SR. FAD is bound at residue W620.

It belongs to the NADPH-dependent diflavin oxidoreductase NDOR1 family. This sequence in the N-terminal section; belongs to the flavodoxin family. In the C-terminal section; belongs to the flavoprotein pyridine nucleotide cytochrome reductase family. As to quaternary structure, interacts with DRE2; as part of the cytosolic iron-sulfur (Fe-S) protein assembly (CIA) machinery. It depends on FAD as a cofactor. FMN is required as a cofactor.

Its subcellular location is the cytoplasm. It is found in the mitochondrion. It carries out the reaction 2 oxidized [2Fe-2S]-[protein] + NADPH = 2 reduced [2Fe-2S]-[protein] + NADP(+) + H(+). NADPH-dependent reductase which is a central component of the cytosolic iron-sulfur (Fe-S) protein assembly (CIA) machinery. Transfers electrons from NADPH via its FAD and FMN prosthetic groups to the [2Fe-2S] cluster of DRE2, another key component of the CIA machinery. In turn, this reduced cluster provides electrons for assembly of cytosolic iron-sulfur cluster proteins. Positively controls H(2)O(2)-induced cell death. The polypeptide is NADPH-dependent diflavin oxidoreductase 1 (Eremothecium gossypii (strain ATCC 10895 / CBS 109.51 / FGSC 9923 / NRRL Y-1056) (Yeast)).